Reading from the N-terminus, the 449-residue chain is UDP-N-acetylmuramate--L-alanine ligase (449 aa).

ATP is bound at residue 121 to 127; it reads GAHGKSS.

The protein belongs to the MurCDEF family.

The protein localises to the cytoplasm. It catalyses the reaction UDP-N-acetyl-alpha-D-muramate + L-alanine + ATP = UDP-N-acetyl-alpha-D-muramoyl-L-alanine + ADP + phosphate + H(+). Its pathway is cell wall biogenesis; peptidoglycan biosynthesis. In terms of biological role, cell wall formation. In Helicobacter pylori (strain P12), this protein is UDP-N-acetylmuramate--L-alanine ligase.